Consider the following 200-residue polypeptide: Serotonin N-acetyltransferase 2, chloroplastic (200 aa).

The N-terminal 41 residues, 1 to 41 (MQMQAARPRVGVRPRGGIRPFPLPTLSFNNNSNRSACACAC), are a transit peptide targeting the chloroplast. Residues 55–195 (FAVRRSSTGL…MAFYRSRQQI (141 aa)) form the N-acetyltransferase domain.

The protein localises to the cytoplasm. It is found in the plastid. The protein resides in the chloroplast. The enzyme catalyses serotonin + acetyl-CoA = N-acetylserotonin + CoA + H(+). It carries out the reaction tyramine + acetyl-CoA = N-acetyltyramine + CoA + H(+). The catalysed reaction is tryptamine + acetyl-CoA = N-acetyltryptamine + CoA + H(+). It catalyses the reaction 5-methoxytryptamine + acetyl-CoA = melatonin + CoA + H(+). It participates in aromatic compound metabolism; melatonin biosynthesis; melatonin from serotonin: step 1/2. In terms of biological role, catalyzes the N-acetylation of serotonin into N-acetylserotonin, the penultimate step in the synthesis of melatonin. Catalyzes in vitro the N-acetylation of tryptamine to produce N-acetyltryptamine, 5-methoxytryptamine to produce melatonin and tyramine to produce N-acetyltyramine. The polypeptide is Serotonin N-acetyltransferase 2, chloroplastic (Oryza sativa subsp. japonica (Rice)).